The primary structure comprises 220 residues: Nucleolar protein 12 (220 aa).

A coiled-coil region spans residues 31–86 (HKRKMQRRKTAVEEIKRKIKEEQKKMKEERHKEYMKMLKEREEALCELEENDELEE). The segment at 109–220 (ISDLDLSGIR…QTGKTRRRRN (112 aa)) is disordered. Basic and acidic residues predominate over residues 139-148 (EKGADEEKPK). Composition is skewed to basic residues over residues 176–186 (RSQRKSGKRPS) and 205–220 (KTQRRKQTGKTRRRRN).

It belongs to the RRP17 family.

The protein resides in the nucleus. Its subcellular location is the nucleolus. Its function is as follows. May bind to rRNA. This Xenopus laevis (African clawed frog) protein is Nucleolar protein 12 (nol12).